The chain runs to 234 residues: Ubiquitin domain-containing protein 1 (234 aa).

Residues 1-47 (MGGCVGTHHDSSGSLNENSDGTGVALGRNQPLKKDKPKWKSDYPMTD) are disordered. Over residues 12–21 (SGSLNENSDG) the composition is skewed to polar residues. The segment covering 32 to 41 (LKKDKPKWKS) has biased composition (basic and acidic residues). Positions 152-227 (CQLRLRLSTG…VQVIVSQPIP (76 aa)) constitute a Ubiquitin-like domain.

Functionally, may be involved in the regulation of cellular senescence through a positive feedback loop with TP53. The chain is Ubiquitin domain-containing protein 1 (ubtd1) from Xenopus laevis (African clawed frog).